Here is a 426-residue protein sequence, read N- to C-terminus: MSKSENLYSAARELIPGGVNSPVRAFTGVGGTPLFIEKADGAYLYDVDGKAYIDYVGSWGPMVLGHNHPAIRNAVIEAAERGLSFGAPTEMEVKMAELVTNLVPTMDMVRMVNSGTEATMSAIRLARGFTGRDKIIKFEGCYHGHADCLLVKAGSGALTLGQPNSPGVPADFAKHTLTCTYNDLTSVRAAFEQYPQEIACIIVEPVAGNMNCVPPLPEFLPGLRALCDEFGALLIIDEVMTGFRVALAGAQDYYGVVPDLTCLGKIIGGGMPVGAFGGRRDVMDALAPTGPVYQAGTLSGNPIAMAAGFACLNEVAQPGIHETLDELTTRLAEGLLEAAEEANIPLVVNHVGGMFGIFFTDAESVTCYQDVMACDVERFKRFFHLMLEEGVYLAPSAFEAGFMSVAHSMDDINNTIDAARRVFAKL.

Residue K265 is modified to N6-(pyridoxal phosphate)lysine.

Belongs to the class-III pyridoxal-phosphate-dependent aminotransferase family. HemL subfamily. Homodimer. The cofactor is pyridoxal 5'-phosphate.

The protein localises to the cytoplasm. It catalyses the reaction (S)-4-amino-5-oxopentanoate = 5-aminolevulinate. Its pathway is porphyrin-containing compound metabolism; protoporphyrin-IX biosynthesis; 5-aminolevulinate from L-glutamyl-tRNA(Glu): step 2/2. This Salmonella typhi protein is Glutamate-1-semialdehyde 2,1-aminomutase.